The following is a 104-amino-acid chain: Protein S100-A14 (104 aa).

Residues 27–61 (KNFHQYSVEGGKETLTPSELRDLVTQQLPHLMPSN) enclose the EF-hand domain.

It belongs to the S-100 family. In terms of assembly, homodimer. Interacts with AGER. As to expression, expressed at highest levels in colon and at moderate levels in thymus, kidney, liver, small intestine, and lung. Low expression in heart and no expression is seen in brain, skeletal muscle, spleen, placenta and peripheral blood leukocytes.

The protein resides in the cytoplasm. Its function is as follows. Modulates P53/TP53 protein levels, and thereby plays a role in the regulation of cell survival and apoptosis. Depending on the context, it can promote cell proliferation or apoptosis. Plays a role in the regulation of cell migration by modulating the levels of MMP2, a matrix protease that is under transcriptional control of P53/TP53. Does not bind calcium. The protein is Protein S100-A14 (S100A14) of Homo sapiens (Human).